The chain runs to 386 residues: Glucose-1-phosphate adenylyltransferase (386 aa).

Residues Y100, G165, 180–181, and S191 each bind alpha-D-glucose 1-phosphate; that span reads EK.

The protein belongs to the bacterial/plant glucose-1-phosphate adenylyltransferase family. As to quaternary structure, homotetramer.

The enzyme catalyses alpha-D-glucose 1-phosphate + ATP + H(+) = ADP-alpha-D-glucose + diphosphate. It functions in the pathway glycan biosynthesis; glycogen biosynthesis. Functionally, involved in the biosynthesis of ADP-glucose, a building block required for the elongation reactions to produce glycogen. Catalyzes the reaction between ATP and alpha-D-glucose 1-phosphate (G1P) to produce pyrophosphate and ADP-Glc. The sequence is that of Glucose-1-phosphate adenylyltransferase from Clostridium beijerinckii (strain ATCC 51743 / NCIMB 8052) (Clostridium acetobutylicum).